A 98-amino-acid chain; its full sequence is NADH-ubiquinone oxidoreductase chain 4L (98 aa).

The next 3 helical transmembrane spans lie at 1–21 (MSLIHMNIIMAFTLSLVGLLM), 29–49 (ALLCMEGMMLSLFILATLTAL), and 59–79 (MPIILLVFAACEAAIGLALLV).

The protein belongs to the complex I subunit 4L family. As to quaternary structure, core subunit of respiratory chain NADH dehydrogenase (Complex I) which is composed of 45 different subunits.

Its subcellular location is the mitochondrion inner membrane. It carries out the reaction a ubiquinone + NADH + 5 H(+)(in) = a ubiquinol + NAD(+) + 4 H(+)(out). Its function is as follows. Core subunit of the mitochondrial membrane respiratory chain NADH dehydrogenase (Complex I) which catalyzes electron transfer from NADH through the respiratory chain, using ubiquinone as an electron acceptor. Part of the enzyme membrane arm which is embedded in the lipid bilayer and involved in proton translocation. The sequence is that of NADH-ubiquinone oxidoreductase chain 4L (MT-ND4L) from Hyperoodon ampullatus (Northern bottlenose whale).